Consider the following 448-residue polypeptide: SVP1-like protein 2 (448 aa).

Asn61, Asn155, Asn256, Asn280, Asn315, and Asn421 each carry an N-linked (GlcNAc...) asparagine glycan. WD repeat units follow at residues 222–262 (AHKN…LIKE) and 267–306 (VDKA…NTET). The segment at 416–435 (THYSLNESLRNEDTKSAGEP) is disordered. Over residues 424–435 (LRNEDTKSAGEP) the composition is skewed to basic and acidic residues.

Belongs to the WD repeat PROPPIN family. Post-translationally, N-glycosylated.

The protein resides in the endosome membrane. It is found in the prevacuolar compartment membrane. Involved in piecemeal microautophagy of the nucleus (micronucleophagy). In Saccharomyces cerevisiae (strain ATCC 204508 / S288c) (Baker's yeast), this protein is SVP1-like protein 2 (HSV2).